A 137-amino-acid polypeptide reads, in one-letter code: Putative pre-16S rRNA nuclease (137 aa).

This sequence belongs to the YqgF nuclease family.

It localises to the cytoplasm. Functionally, could be a nuclease involved in processing of the 5'-end of pre-16S rRNA. The chain is Putative pre-16S rRNA nuclease from Bacillus mycoides (strain KBAB4) (Bacillus weihenstephanensis).